A 644-amino-acid chain; its full sequence is Protein lin-9 (644 aa).

The tract at residues 1–77 (MSSAVRSPRK…GRDSPSVNSL (77 aa)) is disordered. Positions 50 to 62 (SIKRTGSPKKSPA) are enriched in basic residues.

Belongs to the lin-9 family. In terms of assembly, component of the DRM complex, at least composed of lin-9, lin-35, lin-37, lin-52, lin-53, lin-54- dpl-1 and efl-1. Interacts with zft-11; the interaction is required to suppress the activation of non-neuronal genes in neurons.

It is found in the nucleus. Its function is as follows. Synthetic multivulva class B (synMuvB) protein. SynMuvB proteins are required to repress the induction of vulval development by Ras signaling and probably act by forming the multiprotein DRM complex that represses transcription. Required for the development of sheath cells in the hermaphrodite gonad and for the development of the male spicule, rays and gonad. In association with the zinc finger protein ztf-11, negatively regulates the expression of non-neuronal genes during neurogenesis. The protein is Protein lin-9 of Caenorhabditis elegans.